Reading from the N-terminus, the 913-residue chain is Sterol uptake control protein 2 (913 aa).

Residues 50-80 (GCDNCKRRRVKCDEGKPACRKCTNMKLECQY) constitute a DNA-binding region (zn(2)-C6 fungal-type). 2 disordered regions span residues 103-173 (GSVE…SMGL) and 216-258 (GNMG…LAGS). Thr122 is subject to Phosphothreonine. Positions 150–164 (SESEEKSSAPIEDKN) are enriched in basic and acidic residues. A compositionally biased stretch (low complexity) spans 222–241 (QLQQQQQVQQQSQPQTQAQQ). Positions 303–346 (QQHQQVQLQQYQQLRQEQHQQVQQQQQEQLQQYQQHFLQQQQQV) form a coiled coil. Disordered stretches follow at residues 347 to 385 (LLQQ…TLNS) and 453 to 489 (MQEH…GSAS). Polar residues predominate over residues 374–385 (LQSQTSETTLNS). The stretch at 440–472 (ATKASNAEEALANMQEHHERAAASVKENDGQLS) forms a coiled coil. Residues 454–468 (QEHHERAAASVKEND) show a composition bias toward basic and acidic residues. A compositionally biased stretch (polar residues) spans 469–487 (GQLSDTKSPAPSNNAQGGS). Residue Ser519 is modified to Phosphoserine. A compositionally biased stretch (polar residues) spans 552–562 (EPTISLQTSQT). The segment at 552–571 (EPTISLQTSQTENEDDASRQ) is disordered.

The protein resides in the nucleus. Transcription factor that is involved in activation of anaerobic genes such as DAN/TIR cell wall mannoprotein genes and YML083c. Appears to bind to anaerobic response elements (AR1) with the consensus sequence 5'-TCGTTYAG-3' present in the promoter regions of DAN/TIR genes. Involved in sterol uptake and regulation of the sterol biosynthesis. Binds to sterol regulatory elements (SRE) with the consensus sequence 5'-TCGTATA-3' present in ERG2 and ERG3 promoters. May be involved in down-regulation of CWP2 during anaerobic adaptation. This is Sterol uptake control protein 2 (UPC2) from Saccharomyces cerevisiae (strain ATCC 204508 / S288c) (Baker's yeast).